Consider the following 326-residue polypeptide: Alkanal monooxygenase beta chain (326 aa).

The protein belongs to the bacterial luciferase oxidoreductase family. In terms of assembly, heterodimer of an alpha and a beta chain.

It carries out the reaction a long-chain fatty aldehyde + FMNH2 + O2 = a long-chain fatty acid + hnu + FMN + H2O + 2 H(+). In terms of biological role, light-emitting reaction in luminous bacteria. The specific role of the beta subunit is unknown, but it is absolutely required for bioluminescence activity. This chain is Alkanal monooxygenase beta chain (luxB), found in Photobacterium leiognathi.